Consider the following 201-residue polypeptide: Ribosomal RNA large subunit methyltransferase E (201 aa).

The S-adenosyl-L-methionine site is built by Gly-40, Trp-42, Asp-62, Asp-78, and Asp-101. Lys-141 (proton acceptor) is an active-site residue.

It belongs to the class I-like SAM-binding methyltransferase superfamily. RNA methyltransferase RlmE family.

The protein resides in the cytoplasm. It carries out the reaction uridine(2552) in 23S rRNA + S-adenosyl-L-methionine = 2'-O-methyluridine(2552) in 23S rRNA + S-adenosyl-L-homocysteine + H(+). Specifically methylates the uridine in position 2552 of 23S rRNA at the 2'-O position of the ribose in the fully assembled 50S ribosomal subunit. The sequence is that of Ribosomal RNA large subunit methyltransferase E from Anaplasma marginale (strain Florida).